Consider the following 487-residue polypeptide: Probable Xaa-Pro aminopeptidase CPSG_02684 (487 aa).

Positions Met-1–Ser-10 are enriched in polar residues. Positions Met-1 to Ser-22 are disordered. Residues Asp-275, Asp-286, Glu-421, and Glu-460 each contribute to the Mn(2+) site.

Belongs to the peptidase M24B family. It depends on Mn(2+) as a cofactor.

The catalysed reaction is Release of any N-terminal amino acid, including proline, that is linked to proline, even from a dipeptide or tripeptide.. Functionally, catalyzes the removal of a penultimate prolyl residue from the N-termini of peptides. The polypeptide is Probable Xaa-Pro aminopeptidase CPSG_02684 (Coccidioides posadasii (strain RMSCC 757 / Silveira) (Valley fever fungus)).